The sequence spans 389 residues: Heat-inducible transcription repressor HrcA (389 aa).

This sequence belongs to the HrcA family.

Its function is as follows. Negative regulator of class I heat shock genes (grpE-dnaK-dnaJ and groELS operons). Prevents heat-shock induction of these operons. The polypeptide is Heat-inducible transcription repressor HrcA (Synechococcus sp. (strain JA-2-3B'a(2-13)) (Cyanobacteria bacterium Yellowstone B-Prime)).